We begin with the raw amino-acid sequence, 354 residues long: Macrosialin (354 aa).

The signal sequence occupies residues methionine 1–glycine 21. The Extracellular portion of the chain corresponds to asparagine 22–serine 319. Positions aspartate 23–proline 140 are mucin-like. Positions proline 40–histidine 51 are enriched in low complexity. The segment at proline 40–tryptophan 162 is disordered. The span at arginine 52–threonine 61 shows a compositional bias: basic residues. Over residues histidine 62–threonine 84 the composition is skewed to low complexity. 2 repeat units span residues threonine 70–alanine 99 and threonine 100–alanine 129. The interval threonine 70 to alanine 129 is 2 X 30 AA tandem repeats. The segment covering serine 85–glutamine 102 has biased composition (polar residues). 2 N-linked (GlcNAc...) asparagine glycosylation sites follow: asparagine 88 and asparagine 96. The segment covering glycine 103–glycine 117 has biased composition (low complexity). Residues asparagine 118 and asparagine 126 are each glycosylated (N-linked (GlcNAc...) asparagine). A compositionally biased stretch (polar residues) spans valine 121 to threonine 135. A compositionally biased stretch (pro residues) spans proline 140 to serine 150. N-linked (GlcNAc...) asparagine glycans are attached at residues asparagine 164, asparagine 199, asparagine 246, asparagine 261, and asparagine 279. Cysteine 169 and cysteine 207 are joined by a disulfide. Cysteine 277 and cysteine 314 are oxidised to a cystine. Residues isoleucine 320–isoleucine 344 traverse the membrane as a helical segment. Over arginine 345–leucine 354 the chain is Cytoplasmic.

This sequence belongs to the LAMP family. N- and O-glycosylated. In terms of tissue distribution, highly expressed by blood monocytes and tissue macrophages. Also expressed in lymphocytes, fibroblasts and endothelial cells. Expressed in many tumor cell lines which could allow them to attach to selectins on vascular endothelium, facilitating their dissemination to secondary sites.

The protein localises to the cell membrane. The protein resides in the endosome membrane. It localises to the lysosome membrane. Could play a role in phagocytic activities of tissue macrophages, both in intracellular lysosomal metabolism and extracellular cell-cell and cell-pathogen interactions. Binds to tissue- and organ-specific lectins or selectins, allowing homing of macrophage subsets to particular sites. Rapid recirculation of CD68 from endosomes and lysosomes to the plasma membrane may allow macrophages to crawl over selectin-bearing substrates or other cells. In Homo sapiens (Human), this protein is Macrosialin (CD68).